The primary structure comprises 709 residues: Polyribonucleotide nucleotidyltransferase (709 aa).

Residues aspartate 485 and aspartate 491 each contribute to the Mg(2+) site. One can recognise a KH domain in the interval 552-611 (PRIYTMKIDPKKIKDVIGKGGATIRSLTEETGTSIDIDDDGTVKIAAVDSNAAKNVMGRI). The region spanning 621-689 (GAIYKGKVTR…RQGRIRLTMK (69 aa)) is the S1 motif domain.

Belongs to the polyribonucleotide nucleotidyltransferase family. Component of the RNA degradosome, which is a multiprotein complex involved in RNA processing and mRNA degradation. Mg(2+) serves as cofactor.

Its subcellular location is the cytoplasm. The catalysed reaction is RNA(n+1) + phosphate = RNA(n) + a ribonucleoside 5'-diphosphate. Involved in mRNA degradation. Catalyzes the phosphorolysis of single-stranded polyribonucleotides processively in the 3'- to 5'-direction. In Haemophilus influenzae (strain PittEE), this protein is Polyribonucleotide nucleotidyltransferase.